A 946-amino-acid polypeptide reads, in one-letter code: MTLVLFATEYDSAHIVANVLSQTPTDHCVFPLLVKHQVSRRVYFCLQTQKCSDSRRVAPVFAVNNETLQLSRYLAARQPIPLSALIASLDEAETQPLYRHLFRTPVLSPEHGGEVREFKHLVYFHHAAVLRHLNQVFLCPTSPSWFISVFGHTEGQVLLTMAYYLFEGQYSTISTVEEYVRSFCTRDLGTIIPTHASMGEFARLLLGSPFRQRVSAFVAYAVARNRRDYTELEQVDTQINAFRERARLPDTVCVHYVYLAYRTALARARLLEYRRVVAYDADAAPEAQCTREPGFLGRRLSTELLDVMQKYFSLDNFLHDYVETHLLRLDESPHSATSPHGLGLAGYGGRIDGTHLAGFFGTSTQLARQLERINTLSESVFSPLERSLSGLLRLCASLRTAQTYTTGTLTRYSQRRYLLPEPALAPLLERPLPVYRVHLPNDQHVFCAVASETWHRSLFPRDLLRHVPDSRFSDEALTETVWLHDDDVASTSPETQFYYTRHEVFNERLPVFNFVADFDLRLRDGVSGLARHTVFELCRGLRRVWMTVWASLFGYTHPDRHPVYFFKSACPPNSVPVDAAGAPFDDDDYLDYRDERDTEEDEDGKENKNNVPDNGVFQKTTSSVDTSPPYCRCKGKLGLRIITPFPACTVAVHPSVLRAVAQVLNHAVCLDAELHTLLDPISHPESSLDTGIYHHGRSVRLPYMYKMDQDDGYFMHRRLLPLFIVPDAYREHPLGFVRAQLDLRNLLHHHPPHDLPALPLSPPPRVILSVRDKICPSTEANFIETRSLNVTRYRRRGLTEVLAYHLYGGDGATAAAISDTDLQRLVVTRVWPPLLEHLTQHYEPHVSEQFTAPHVLLFQPHGACCVAVKRRDGARTRDFRCLNYTHRNPQETVQVFIDLRTEHSYALWASLWSRCFTKKCHSNAKNVHISIKIRPPDAPMPPATAV.

Positions 596 to 626 are disordered; sequence RDTEEDEDGKENKNNVPDNGVFQKTTSSVDT. The segment covering 617-626 has biased composition (polar residues); the sequence is FQKTTSSVDT. The CHC2-type zinc-finger motif lies at 881 to 920; the sequence is CLNYTHRNPQETVQVFIDLRTEHSYALWASLWSRCFTKKC.

This sequence belongs to the herpesviridae DNA primase family. As to quaternary structure, associates with the helicase and the primase-associated factor to form the helicase-primase factor. Interacts with host SNAPIN.

The protein localises to the host nucleus. Its function is as follows. Essential component of the helicase/primase complex. Unwinds the DNA at the replication forks and generates single-stranded DNA for both leading and lagging strand synthesis. The primase initiates primer synthesis and thereby produces large amount of short RNA primers on the lagging strand that the polymerase elongates using dNTPs. The chain is DNA primase (UL70) from Homo sapiens (Human).